The primary structure comprises 266 residues: MLHVSMVGCGAIGRGVMELLKSDPEVVFDVVIVPEHTMDEARDAVTALAPGARVATHLDDQRPDLLVECAGHHALEEHIVPALERGIPCMVVSVGALSEPGMAERLEAAARRGGTQVQLLSGAIGAIDALAAARVGGLDEVIYTGRKPARAWAGTPAEQLFDLDALTEATVIFEGTARDAARLYPKNANVAATVSLAGLGLDRTSVKLLADPHAVENVHHVEARGAFGGFELTMRGKPLAANPKTSALTVFSVVRALGNRAHAVSI.

Residues A123 and N189 each coordinate NAD(+). Residue H219 is part of the active site.

The protein belongs to the L-aspartate dehydrogenase family.

The enzyme catalyses L-aspartate + NADP(+) + H2O = oxaloacetate + NH4(+) + NADPH + H(+). It carries out the reaction L-aspartate + NAD(+) + H2O = oxaloacetate + NH4(+) + NADH + H(+). It functions in the pathway cofactor biosynthesis; NAD(+) biosynthesis; iminoaspartate from L-aspartate (dehydrogenase route): step 1/1. Its function is as follows. Specifically catalyzes the NAD or NADP-dependent dehydrogenation of L-aspartate to iminoaspartate. This is L-aspartate dehydrogenase from Cupriavidus necator (strain ATCC 17699 / DSM 428 / KCTC 22496 / NCIMB 10442 / H16 / Stanier 337) (Ralstonia eutropha).